Reading from the N-terminus, the 382-residue chain is Galactose-1-phosphate uridylyltransferase (382 aa).

Residues Cys52 and Cys55 each coordinate Zn(2+). UDP-alpha-D-glucose-binding positions include Ala61 and 77 to 78 (ND). His121 contributes to the Zn(2+) binding site. Asn185 provides a ligand contact to UDP-alpha-D-glucose. His196 serves as a coordination point for Zn(2+). The Tele-UMP-histidine intermediate role is filled by His198. Gln200 contributes to the UDP-alpha-D-glucose binding site. The Fe cation site is built by Glu214, His313, His330, and His332. Residues 345–348 (KFLV) and 350–351 (FE) contribute to the UDP-alpha-D-glucose site.

Belongs to the galactose-1-phosphate uridylyltransferase type 1 family. Homodimer. Zn(2+) is required as a cofactor.

It carries out the reaction alpha-D-galactose 1-phosphate + UDP-alpha-D-glucose = alpha-D-glucose 1-phosphate + UDP-alpha-D-galactose. The protein operates within carbohydrate metabolism; galactose metabolism. Its function is as follows. Essential for growth on galactose but not for cellulase induction. This chain is Galactose-1-phosphate uridylyltransferase (gal7), found in Hypocrea jecorina (Trichoderma reesei).